Reading from the N-terminus, the 425-residue chain is Protein upregulated in glial subsets pugs-5 (425 aa).

Over residues asparagine 355–glycine 373 the composition is skewed to basic and acidic residues. A disordered region spans residues asparagine 355 to methionine 407.

The protein is Protein upregulated in glial subsets pugs-5 of Caenorhabditis elegans.